Consider the following 339-residue polypeptide: Protein RecA (339 aa).

66-73 is a binding site for ATP; that stretch reads GPESSGKT.

It belongs to the RecA family.

It localises to the cytoplasm. Its function is as follows. Can catalyze the hydrolysis of ATP in the presence of single-stranded DNA, the ATP-dependent uptake of single-stranded DNA by duplex DNA, and the ATP-dependent hybridization of homologous single-stranded DNAs. It interacts with LexA causing its activation and leading to its autocatalytic cleavage. This chain is Protein RecA, found in Geobacter metallireducens (strain ATCC 53774 / DSM 7210 / GS-15).